The primary structure comprises 463 residues: Cysteine--tRNA ligase (463 aa).

Zn(2+) is bound at residue Cys-28. Positions 30–40 (ITIYDLCHIGH) match the 'HIGH' region motif. Positions 209, 234, and 238 each coordinate Zn(2+). Positions 266–270 (KMSKS) match the 'KMSKS' region motif. Lys-269 is an ATP binding site.

This sequence belongs to the class-I aminoacyl-tRNA synthetase family. In terms of assembly, monomer. Zn(2+) serves as cofactor.

The protein localises to the cytoplasm. It catalyses the reaction tRNA(Cys) + L-cysteine + ATP = L-cysteinyl-tRNA(Cys) + AMP + diphosphate. This chain is Cysteine--tRNA ligase, found in Proteus mirabilis (strain HI4320).